The following is a 274-amino-acid chain: Dermonecrotic toxin SdSicTox-betaIIB1bvii (274 aa).

His5 is a catalytic residue. 2 residues coordinate Mg(2+): Glu25 and Asp27. Residue His41 is the Nucleophile of the active site. Cystine bridges form between Cys45–Cys51 and Cys47–Cys190. Position 85 (Asp85) interacts with Mg(2+).

The protein belongs to the arthropod phospholipase D family. Class II subfamily. Requires Mg(2+) as cofactor. Expressed by the venom gland.

It is found in the secreted. The catalysed reaction is an N-(acyl)-sphingosylphosphocholine = an N-(acyl)-sphingosyl-1,3-cyclic phosphate + choline. It carries out the reaction an N-(acyl)-sphingosylphosphoethanolamine = an N-(acyl)-sphingosyl-1,3-cyclic phosphate + ethanolamine. It catalyses the reaction a 1-acyl-sn-glycero-3-phosphocholine = a 1-acyl-sn-glycero-2,3-cyclic phosphate + choline. The enzyme catalyses a 1-acyl-sn-glycero-3-phosphoethanolamine = a 1-acyl-sn-glycero-2,3-cyclic phosphate + ethanolamine. Functionally, dermonecrotic toxins cleave the phosphodiester linkage between the phosphate and headgroup of certain phospholipids (sphingolipid and lysolipid substrates), forming an alcohol (often choline) and a cyclic phosphate. This toxin acts on sphingomyelin (SM). It may also act on ceramide phosphoethanolamine (CPE), lysophosphatidylcholine (LPC) and lysophosphatidylethanolamine (LPE), but not on lysophosphatidylserine (LPS), and lysophosphatidylglycerol (LPG). It acts by transphosphatidylation, releasing exclusively cyclic phosphate products as second products. Induces dermonecrosis, hemolysis, increased vascular permeability, edema, inflammatory response, and platelet aggregation. This Sicarius cf. damarensis (strain GJB-2008) (Six-eyed sand spider) protein is Dermonecrotic toxin SdSicTox-betaIIB1bvii.